We begin with the raw amino-acid sequence, 2115 residues long: Non-reducing polyketide synthase PFUR17_0229 (2115 aa).

An N-terminal acylcarrier protein transacylase (SAT) domain (SAT) region spans residues 8-246 (VLFGDQTVDP…ISLPITAAFH (239 aa)). In terms of domain architecture, Ketosynthase family 3 (KS3) spans 367–796 (SGDIAIVGVA…GGNTSLVLED (430 aa)). Active-site for beta-ketoacyl synthase activity residues include C539, H674, and H713. The malonyl-CoA:ACP transacylase (MAT) domain stretch occupies residues 895–1218 (IFAFTGQGAQ…SISNAYNSGA (324 aa)). Residues 1279 to 1592 (TTCLQKVESE…KRNILQSLLS (314 aa)) are product template (PT) domain. The segment at 1282 to 1413 (LQKVESETFT…CTVMYGDGQQ (132 aa)) is N-terminal hotdog fold. One can recognise a PKS/mFAS DH domain in the interval 1282 to 1588 (LQKVESETFT…FQKMKRNILQ (307 aa)). The Proton acceptor; for dehydratase activity role is filled by H1315. The interval 1441 to 1588 (VHRLLKEMIY…FQKMKRNILQ (148 aa)) is C-terminal hotdog fold. D1501 functions as the Proton donor; for dehydratase activity in the catalytic mechanism. The disordered stretch occupies residues 1594-1613 (GHEETPPARPVPSKRTVQGS). The 78-residue stretch at 1626–1703 (KAASGGFSNI…QLRNFFLDKV (78 aa)) folds into the Carrier 1 domain. Position 1663 is an O-(pantetheine 4'-phosphoryl)serine (S1663). The disordered stretch occupies residues 1710–1742 (FDDEESEMSSSTAGSTPGSSTSHGNQNTTVTTP). Positions 1718-1733 (SSSTAGSTPGSSTSHG) are enriched in low complexity. One can recognise a Carrier 2 domain in the interval 1742 to 1819 (PAEPDVVAIL…DVQKALGVPS (78 aa)). S1779 is subject to O-(pantetheine 4'-phosphoryl)serine. Residues 1861–2097 (LFLLPDGAGS…VVGGNHFSIM (237 aa)) form a thioesterase (TE) domain region.

Pantetheine 4'-phosphate serves as cofactor.

It carries out the reaction 6 malonyl-CoA + 2 acetyl-CoA + 5 H(+) = o-orsellinate depside + 6 CO2 + 8 CoA + H2O. Functionally, non-reducing polyketide synthase; part of a gene cluster that mediates the biosynthesis of a yet unidentified depside/depsidone compound. The first step in the pathway is performed by the PKS PFUR17_0229 that condenses 2 acetyl-CoA starter units with 6 malonyl-CoA units to produce lecanoric acid (LA), also known as orsellinate depside. The biosynthesis occurs via the formation of 2 orsellinate intermediates fused together by the C-terminal thioesterase (TE) domain that finally releases lecanoric acid. In addition to the PKS gene, the PFUR17 gene cluster contains closely linked genes encoding a cytochrome P-450 and a laccase (phenol oxidase), directly upstream and downstream respectively, so it is likely that lecanoric acid is an intermediate in a longer biosynthetic pathway. This Pseudevernia furfuracea (Tree moss) protein is Non-reducing polyketide synthase PFUR17_0229.